A 279-amino-acid polypeptide reads, in one-letter code: Large ribosomal subunit protein uL2 (279 aa).

Positions 222–279 (GVAMNPVDHPHGGGEGRTSGGRHPVTPAGKPTKGAKTRVNKATDKFIIRSRHKAKKGR) are disordered. A compositionally biased stretch (basic residues) spans 269–279 (IRSRHKAKKGR).

It belongs to the universal ribosomal protein uL2 family. As to quaternary structure, part of the 50S ribosomal subunit. Forms a bridge to the 30S subunit in the 70S ribosome.

Its function is as follows. One of the primary rRNA binding proteins. Required for association of the 30S and 50S subunits to form the 70S ribosome, for tRNA binding and peptide bond formation. It has been suggested to have peptidyltransferase activity; this is somewhat controversial. Makes several contacts with the 16S rRNA in the 70S ribosome. This Caulobacter vibrioides (strain ATCC 19089 / CIP 103742 / CB 15) (Caulobacter crescentus) protein is Large ribosomal subunit protein uL2.